Consider the following 118-residue polypeptide: Ribosome-binding factor A (118 aa).

The protein belongs to the RbfA family. As to quaternary structure, monomer. Binds 30S ribosomal subunits, but not 50S ribosomal subunits or 70S ribosomes.

It localises to the cytoplasm. Functionally, one of several proteins that assist in the late maturation steps of the functional core of the 30S ribosomal subunit. Associates with free 30S ribosomal subunits (but not with 30S subunits that are part of 70S ribosomes or polysomes). Required for efficient processing of 16S rRNA. May interact with the 5'-terminal helix region of 16S rRNA. The chain is Ribosome-binding factor A from Shouchella clausii (strain KSM-K16) (Alkalihalobacillus clausii).